Reading from the N-terminus, the 155-residue chain is E3 ubiquitin-protein ligase RHA2A (155 aa).

The RING-type; atypical zinc finger occupies 86 to 128 (CVVCLSKLKEGEEVRKLECRHVFHKKCLEGWLHQFNFTCPLCR).

As to quaternary structure, interacts with NAC019 and NAC055. In terms of tissue distribution, expressed in stems, flowers, cauline leaves, rosettes, siliques, seeds and roots.

The protein localises to the cytoplasm. Its subcellular location is the nucleus. It carries out the reaction S-ubiquitinyl-[E2 ubiquitin-conjugating enzyme]-L-cysteine + [acceptor protein]-L-lysine = [E2 ubiquitin-conjugating enzyme]-L-cysteine + N(6)-ubiquitinyl-[acceptor protein]-L-lysine.. It functions in the pathway protein modification; protein ubiquitination. Functionally, E3 ubiquitin-protein ligase involved in the positive regulation of abscisic acid (ABA) signaling and responses to salt and osmotic stresses during seed germination and early seedling development. Acts additively with RHA2B in regulating ABA signaling and drought response. Possesses E3 ubiquitin ligase activity in vitro. This Arabidopsis thaliana (Mouse-ear cress) protein is E3 ubiquitin-protein ligase RHA2A.